The chain runs to 406 residues: Tyrosine--tRNA ligase (406 aa).

Residue Tyr-35 participates in L-tyrosine binding. A 'HIGH' region motif is present at residues 40 to 49 (PTADSLHIGH). L-tyrosine contacts are provided by Tyr-168 and Gln-172. The 'KMSKS' region signature appears at 228–232 (KMGKT). Lys-231 provides a ligand contact to ATP. One can recognise an S4 RNA-binding domain in the interval 340 to 406 (CSVVELLVDI…KKNYNRIIIK (67 aa)).

This sequence belongs to the class-I aminoacyl-tRNA synthetase family. TyrS type 1 subfamily. As to quaternary structure, homodimer.

It localises to the cytoplasm. It carries out the reaction tRNA(Tyr) + L-tyrosine + ATP = L-tyrosyl-tRNA(Tyr) + AMP + diphosphate + H(+). Its function is as follows. Catalyzes the attachment of tyrosine to tRNA(Tyr) in a two-step reaction: tyrosine is first activated by ATP to form Tyr-AMP and then transferred to the acceptor end of tRNA(Tyr). In Clostridium kluyveri (strain NBRC 12016), this protein is Tyrosine--tRNA ligase.